A 246-amino-acid polypeptide reads, in one-letter code: Phycocyanobilin:ferredoxin oxidoreductase (246 aa).

It belongs to the HY2 family.

It carries out the reaction (2R,3Z)-phycocyanobilin + 4 oxidized [2Fe-2S]-[ferredoxin] = biliverdin IXalpha + 4 reduced [2Fe-2S]-[ferredoxin] + 4 H(+). In terms of biological role, catalyzes the four-electron reduction of biliverdin IX-alpha (2-electron reduction at both the A and D rings); the reaction proceeds via an isolatable 2-electron intermediate, 181,182-dihydrobiliverdin. The protein is Phycocyanobilin:ferredoxin oxidoreductase of Synechococcus sp. (strain CC9902).